Reading from the N-terminus, the 369-residue chain is 3-dehydroquinate synthase (369 aa).

Residues 80 to 85 (DGEQYK), 114 to 118 (GVIGD), 138 to 139 (TT), Lys151, Lys160, and 178 to 181 (TLKT) contribute to the NAD(+) site. Zn(2+) contacts are provided by Glu193, His256, and His273.

This sequence belongs to the sugar phosphate cyclases superfamily. Dehydroquinate synthase family. Co(2+) is required as a cofactor. It depends on Zn(2+) as a cofactor. Requires NAD(+) as cofactor.

Its subcellular location is the cytoplasm. The enzyme catalyses 7-phospho-2-dehydro-3-deoxy-D-arabino-heptonate = 3-dehydroquinate + phosphate. It functions in the pathway metabolic intermediate biosynthesis; chorismate biosynthesis; chorismate from D-erythrose 4-phosphate and phosphoenolpyruvate: step 2/7. Functionally, catalyzes the conversion of 3-deoxy-D-arabino-heptulosonate 7-phosphate (DAHP) to dehydroquinate (DHQ). This chain is 3-dehydroquinate synthase, found in Psychrobacter cryohalolentis (strain ATCC BAA-1226 / DSM 17306 / VKM B-2378 / K5).